The following is a 315-amino-acid chain: Methionyl-tRNA formyltransferase (315 aa).

An N-terminal domain region spans residues 2–189 (SDSLRIIFAG…LITTLKQLAD (188 aa)). 113 to 116 (SLLP) provides a ligand contact to (6S)-5,6,7,8-tetrahydrofolate. The interval 210-315 (KEEARIDWSL…EWFIPGNRLA (106 aa)) is C-terminal domain.

Belongs to the Fmt family.

The enzyme catalyses L-methionyl-tRNA(fMet) + (6R)-10-formyltetrahydrofolate = N-formyl-L-methionyl-tRNA(fMet) + (6S)-5,6,7,8-tetrahydrofolate + H(+). Its function is as follows. Attaches a formyl group to the free amino group of methionyl-tRNA(fMet). The formyl group appears to play a dual role in the initiator identity of N-formylmethionyl-tRNA by promoting its recognition by IF2 and preventing the misappropriation of this tRNA by the elongation apparatus. The protein is Methionyl-tRNA formyltransferase of Salmonella choleraesuis (strain SC-B67).